The chain runs to 248 residues: Caffeoyl-CoA O-methyltransferase 3 (248 aa).

Residue Lys-22 coordinates substrate. S-adenosyl-L-methionine-binding positions include Thr-64, Glu-86, 88-89 (GV), Ser-94, Asp-112, and Ala-141. Asp-164 contributes to the substrate binding site. Asp-164 lines the a divalent metal cation pocket. An S-adenosyl-L-methionine-binding site is contributed by Asp-166. Residues Asp-190 and Asn-191 each contribute to the a divalent metal cation site. Position 195 (Asn-195) interacts with substrate.

The protein belongs to the class I-like SAM-binding methyltransferase superfamily. Cation-dependent O-methyltransferase family. CCoAMT subfamily. A divalent metal cation is required as a cofactor. Mostly expressed in petal limbs and tubes, and, at low levels, in stems, roots and leaves.

It is found in the cytoplasm. It localises to the cytosol. The catalysed reaction is (E)-caffeoyl-CoA + S-adenosyl-L-methionine = (E)-feruloyl-CoA + S-adenosyl-L-homocysteine + H(+). It carries out the reaction (E)-5-hydroxyferuloyl-CoA + S-adenosyl-L-methionine = (E)-sinapoyl-CoA + S-adenosyl-L-homocysteine + H(+). The protein operates within aromatic compound metabolism; phenylpropanoid biosynthesis. In terms of biological role, involved in the production of floral volatile phenylpropanoids in flowers of fragrant cultivars (e.g. cv. Mitchell and cv. V26) from cinnamic acid, a common precursor with the anthocyanin biosynthesis pathway involved in flower pigmentation. Methylates caffeoyl-CoA to feruloyl-CoA, also able to methylate 5-hydroxyferuloyl-CoA. The chain is Caffeoyl-CoA O-methyltransferase 3 from Petunia hybrida (Petunia).